The primary structure comprises 198 residues: FMN-dependent NADH:quinone oxidoreductase (198 aa).

FMN-binding positions include serine 9 and 95-98; that span reads MYNF.

It belongs to the azoreductase type 1 family. Homodimer. Requires FMN as cofactor.

It catalyses the reaction 2 a quinone + NADH + H(+) = 2 a 1,4-benzosemiquinone + NAD(+). The enzyme catalyses N,N-dimethyl-1,4-phenylenediamine + anthranilate + 2 NAD(+) = 2-(4-dimethylaminophenyl)diazenylbenzoate + 2 NADH + 2 H(+). Quinone reductase that provides resistance to thiol-specific stress caused by electrophilic quinones. In terms of biological role, also exhibits azoreductase activity. Catalyzes the reductive cleavage of the azo bond in aromatic azo compounds to the corresponding amines. The polypeptide is FMN-dependent NADH:quinone oxidoreductase (Alcanivorax borkumensis (strain ATCC 700651 / DSM 11573 / NCIMB 13689 / SK2)).